The chain runs to 782 residues: Endonuclease MutS2 (782 aa).

336–343 (GPNTGGKT) is an ATP binding site. The region spanning 707-782 (LDLRGYRYED…GFGVTVATLK (76 aa)) is the Smr domain.

This sequence belongs to the DNA mismatch repair MutS family. MutS2 subfamily. As to quaternary structure, homodimer. Binds to stalled ribosomes, contacting rRNA.

Endonuclease that is involved in the suppression of homologous recombination and thus may have a key role in the control of bacterial genetic diversity. Functionally, acts as a ribosome collision sensor, splitting the ribosome into its 2 subunits. Detects stalled/collided 70S ribosomes which it binds and splits by an ATP-hydrolysis driven conformational change. Acts upstream of the ribosome quality control system (RQC), a ribosome-associated complex that mediates the extraction of incompletely synthesized nascent chains from stalled ribosomes and their subsequent degradation. Probably generates substrates for RQC. The sequence is that of Endonuclease MutS2 from Staphylococcus aureus (strain Mu50 / ATCC 700699).